The primary structure comprises 427 residues: MKNFVEELKWRGMLHDIMPGTEEYLLKNQTTAYVGFDPTASSLTIGNLVTIMMLVHFQHAGHIPMALVGGATGMIGDPSGRSEERNFLSEETLRLNQEGIRKQLTKFLDFDCGANSAKLVNNYDWFKGIGFLEFLRDAGKHLTVNYMMAKDSVKKRLEVGLTFTEFSYQLLQGYDFCHLYQKENVRLQMGGSDQWGNITSGTELIRRMADGTAFALTTPLLTKADGTKFGKSAGGNIWLDAALTSPYKFYQFWLNSADEDVSRFIRIFTLLSKEAIEALEAEHAKAPHERLLQKTLAKDITIRVHSEEDYEMAIKASEILFGKSVTEDLQALNESTLLSVFEGIPLIEISRSILDEKPSVLDLLSTLTNSEVFPSKGEARKMIQGGGVSINKIKINSSEEIVNYPLLLNNYLLVQKGKKNYYLLRFN.

An L-tyrosine-binding site is contributed by Tyr-33. The 'HIGH' region signature appears at Pro-38–Asn-47. 2 residues coordinate L-tyrosine: Tyr-168 and Gln-172. A 'KMSKS' region motif is present at residues Lys-228–Ser-232. ATP is bound at residue Lys-231. One can recognise an S4 RNA-binding domain in the interval Leu-361–Asn-427.

It belongs to the class-I aminoacyl-tRNA synthetase family. TyrS type 1 subfamily. Homodimer.

Its subcellular location is the cytoplasm. It carries out the reaction tRNA(Tyr) + L-tyrosine + ATP = L-tyrosyl-tRNA(Tyr) + AMP + diphosphate + H(+). Its function is as follows. Catalyzes the attachment of tyrosine to tRNA(Tyr) in a two-step reaction: tyrosine is first activated by ATP to form Tyr-AMP and then transferred to the acceptor end of tRNA(Tyr). The sequence is that of Tyrosine--tRNA ligase from Cytophaga hutchinsonii (strain ATCC 33406 / DSM 1761 / CIP 103989 / NBRC 15051 / NCIMB 9469 / D465).